The following is a 157-amino-acid chain: Phosphopantetheine adenylyltransferase (157 aa).

Thr8 contacts substrate. Residues 8-9 (TF) and His16 contribute to the ATP site. The substrate site is built by Lys40, Thr72, and Arg86. ATP contacts are provided by residues 87–89 (GLR), Glu97, and 122–128 (YSFLSSS).

It belongs to the bacterial CoaD family. Homohexamer. The cofactor is Mg(2+).

The protein resides in the cytoplasm. It catalyses the reaction (R)-4'-phosphopantetheine + ATP + H(+) = 3'-dephospho-CoA + diphosphate. It functions in the pathway cofactor biosynthesis; coenzyme A biosynthesis; CoA from (R)-pantothenate: step 4/5. Its function is as follows. Reversibly transfers an adenylyl group from ATP to 4'-phosphopantetheine, yielding dephospho-CoA (dPCoA) and pyrophosphate. This Prochlorococcus marinus (strain MIT 9301) protein is Phosphopantetheine adenylyltransferase.